The primary structure comprises 264 residues: Interleukin-33 (264 aa).

A homeodomain-like HTH domain region spans residues 1–67; the sequence is MRPRMKYSNS…ETCYFGKEPA (67 aa). A propeptide spanning residues 1–101 is cleaved from the precursor; it reads MRPRMKYSNS…RSLLGSIQAF (101 aa). Positions 66–108 are interaction with RELA; it reads PAKRYSLKSGSKHEGRLSTCLPDSRKRSLLGSIQAFAASVDTL.

It belongs to the IL-1 family. Highly divergent. Forms a 1:1:1 heterotrimeric complex with its primary high-affinity receptor IL1RL1 and the coreceptor IL1RAP. Interacts with cargo receptor TMED10; the interaction mediates the translocation from the cytoplasm into the ERGIC (endoplasmic reticulum-Golgi intermediate compartment) and thereby secretion. The full-length protein can be released from cells and is able to signal via the IL1RL1/ST2 receptor. However, proteolytic processing by CELA1, CSTG/cathepsin G and ELANE/neutrophil elastase produces C-terminal peptides that are more active than the unprocessed full-length protein. May also be proteolytically processed by calpains. Proteolytic cleavage mediated by apoptotic caspases including CASP3 and CASP7 results in IL33 inactivation. In vitro proteolytic cleavage by CASP1 was reported but could not be confirmed in vivo suggesting that IL33 is probably not a direct substrate for that caspase.

It is found in the nucleus. The protein resides in the chromosome. Its subcellular location is the cytoplasm. The protein localises to the cytoplasmic vesicle. It localises to the secretory vesicle. It is found in the secreted. Its function is as follows. Cytokine that binds to and signals through the IL1RL1/ST2 receptor which in turn activates NF-kappa-B and MAPK signaling pathways in target cells. Involved in the maturation of Th2 cells inducing the secretion of T-helper type 2-associated cytokines. Also involved in activation of mast cells, basophils, eosinophils and natural killer cells. Acts as a chemoattractant for Th2 cells, and may function as an 'alarmin', that amplifies immune responses during tissue injury. Induces rapid UCP2-dependent mitochondrial rewiring that attenuates the generation of reactive oxygen species and preserves the integrity of Krebs cycle required for persistent production of itaconate and subsequent GATA3-dependent differentiation of inflammation-resolving alternatively activated macrophages. Functionally, in quiescent endothelia the uncleaved form is constitutively and abundantly expressed, and acts as a chromatin-associated nuclear factor with transcriptional repressor properties, it may sequester nuclear NF-kappaB/RELA, lowering expression of its targets. This form is rapidely lost upon angiogenic or pro-inflammatory activation. This is Interleukin-33 from Rattus norvegicus (Rat).